A 216-amino-acid chain; its full sequence is GTP cyclohydrolase 1 (216 aa).

Residues Cys-109, His-112, and Cys-180 each coordinate Zn(2+).

The protein belongs to the GTP cyclohydrolase I family. As to quaternary structure, toroid-shaped homodecamer, composed of two pentamers of five dimers.

It carries out the reaction GTP + H2O = 7,8-dihydroneopterin 3'-triphosphate + formate + H(+). It functions in the pathway cofactor biosynthesis; 7,8-dihydroneopterin triphosphate biosynthesis; 7,8-dihydroneopterin triphosphate from GTP: step 1/1. This Wigglesworthia glossinidia brevipalpis protein is GTP cyclohydrolase 1.